A 663-amino-acid chain; its full sequence is UvrABC system protein B (663 aa).

Residues 26-414 form the Helicase ATP-binding domain; that stretch reads DGLESGLAKQ…DNVAEQVVRP (389 aa). 39 to 46 is an ATP binding site; the sequence is GVTGSGKT. Residues 92 to 115 carry the Beta-hairpin motif; the sequence is YYDYYQPEAYVPASDTFIEKDASI. The Helicase C-terminal domain maps to 430–596; that stretch reads QVDDLMSEIR…GINKSVEDIL (167 aa). The UVR domain occupies 624–659; sequence VKQINALEKQMYSHAQNMEFELAAKIRDEYLLLKEQ.

Belongs to the UvrB family. Forms a heterotetramer with UvrA during the search for lesions. Interacts with UvrC in an incision complex.

The protein localises to the cytoplasm. Functionally, the UvrABC repair system catalyzes the recognition and processing of DNA lesions. A damage recognition complex composed of 2 UvrA and 2 UvrB subunits scans DNA for abnormalities. Upon binding of the UvrA(2)B(2) complex to a putative damaged site, the DNA wraps around one UvrB monomer. DNA wrap is dependent on ATP binding by UvrB and probably causes local melting of the DNA helix, facilitating insertion of UvrB beta-hairpin between the DNA strands. Then UvrB probes one DNA strand for the presence of a lesion. If a lesion is found the UvrA subunits dissociate and the UvrB-DNA preincision complex is formed. This complex is subsequently bound by UvrC and the second UvrB is released. If no lesion is found, the DNA wraps around the other UvrB subunit that will check the other stand for damage. This is UvrABC system protein B from Legionella pneumophila subsp. pneumophila (strain Philadelphia 1 / ATCC 33152 / DSM 7513).